A 260-amino-acid chain; its full sequence is Alpha carbonic anhydrase 6 (260 aa).

The signal sequence occupies residues 1–28 (MDANTKTILFFVVFFIDLFSPNILFVYA). Residues 35 to 260 (PLFTYKQKTE…FVFVFWCMLM (226 aa)) enclose the Alpha-carbonic anhydrase domain. An intrachain disulfide couples Cys60 to Cys215. The Proton acceptor role is filled by His100. Zn(2+) contacts are provided by His126 and His128. Asn136 is a glycosylation site (N-linked (GlcNAc...) asparagine). His145 contributes to the Zn(2+) binding site. 211 to 212 (TI) lines the substrate pocket.

It belongs to the alpha-class carbonic anhydrase family. Zn(2+) is required as a cofactor. In terms of processing, N-glycosylated.

Its subcellular location is the plastid. It localises to the chloroplast stroma. The catalysed reaction is hydrogencarbonate + H(+) = CO2 + H2O. Reversible hydration of carbon dioxide. This is Alpha carbonic anhydrase 6 (ACA6) from Arabidopsis thaliana (Mouse-ear cress).